The primary structure comprises 143 residues: Large-conductance mechanosensitive channel (143 aa).

The next 2 helical transmembrane spans lie at 10–30 and 89–109; these read FAVK…GAFS and GSFI…FLMV.

Belongs to the MscL family. Homopentamer.

It is found in the cell inner membrane. Channel that opens in response to stretch forces in the membrane lipid bilayer. May participate in the regulation of osmotic pressure changes within the cell. This is Large-conductance mechanosensitive channel from Burkholderia cenocepacia (strain ATCC BAA-245 / DSM 16553 / LMG 16656 / NCTC 13227 / J2315 / CF5610) (Burkholderia cepacia (strain J2315)).